The following is an 828-amino-acid chain: Sarcolemmal membrane-associated protein (828 aa).

The segment at 1-163 (MPSALAIFTC…AANTPSMYSQ (163 aa)) is necessary for targeting to centrosomes. The Cytoplasmic portion of the chain corresponds to 1–802 (MPSALAIFTC…REKGNNKPWP (802 aa)). In terms of domain architecture, FHA spans 28-85 (IKIGRSVARCRPAQNNATFDCKVLSRNHALVWFDHKTGKFYLQDTKSSNGTFINSQRL). S148 bears the Phosphoserine mark. Coiled coils occupy residues 167-202 (QLSQ…ASDT) and 230-388 (NQTE…QEKT). A helical; Anchor for type IV membrane protein membrane pass occupies residues 339-359 (KKELQHKIDEMEEKEQELQAK). The span at 433–446 (KLSKENQTRAKESD) shows a compositional bias: basic and acidic residues. The segment at 433-467 (KLSKENQTRAKESDFSDTLSPSKEKSSDDTTDAQM) is disordered. Phosphoserine occurs at positions 448 and 452. Positions 477 to 799 (AKVSLLKDDL…KLLREKGNNK (323 aa)) form a coiled coil. The chain crosses the membrane as a helical; Anchor for type IV membrane protein span at residues 803 to 823 (WMPMLAALVAVTAIVLYVPGL). At 824–828 (ARASP) the chain is on the extracellular side.

This sequence belongs to the SLMAP family. In terms of assembly, homodimer. Interacts with myosin. Interacts with SIKE1 and both associate with the STRIPAK core complex composed of PP2A catalytic and scaffolding subunits, the striatins (PP2A regulatory subunits), the striatin-associated proteins MOB4, STRIP1 and STRIP2, PDCD10 and members of the STE20 kinases, such as STK24 and STK26. Interacts (via FHA domain) with STK3 (when phosphorylated); the interaction associates STK3 with the STRIPAK complex.

The protein localises to the cell membrane. It localises to the sarcolemma. The protein resides in the cytoplasm. Its subcellular location is the myofibril. It is found in the sarcomere. The protein localises to the m line. It localises to the z line. The protein resides in the cytoskeleton. Its subcellular location is the microtubule organizing center. It is found in the centrosome. The protein localises to the endoplasmic reticulum membrane. It localises to the mitochondrion membrane. Associates with the striatin-interacting phosphatase and kinase (STRIPAK) core complex, forming the extended (SIKE1:SLMAP)STRIPAK complex. The (SIKE1:SLMAP)STRIPAK complex dephosphorylates STK3 leading to the inhibition of Hippo signaling and the control of cell growth. May play a role during myoblast fusion. The chain is Sarcolemmal membrane-associated protein from Homo sapiens (Human).